Here is a 210-residue protein sequence, read N- to C-terminus: Oligoribonuclease (210 aa).

Positions 12–177 constitute an Exonuclease domain; it reads LVWIDLEMTG…ADIVESIREL (166 aa). Tyr134 is a catalytic residue.

Belongs to the oligoribonuclease family.

It localises to the cytoplasm. Functionally, 3'-to-5' exoribonuclease specific for small oligoribonucleotides. This is Oligoribonuclease from Corynebacterium diphtheriae (strain ATCC 700971 / NCTC 13129 / Biotype gravis).